The primary structure comprises 77 residues: uncharacterized protein (77 aa).

A helical membrane pass occupies residues 49–71 (LVIASLILAIILLGILYYISYQM).

The protein localises to the membrane. This is an uncharacterized protein from Archaeoglobus fulgidus (strain ATCC 49558 / DSM 4304 / JCM 9628 / NBRC 100126 / VC-16).